Consider the following 160-residue polypeptide: Phosphopantetheine adenylyltransferase (160 aa).

Ser10 is a binding site for substrate. ATP is bound by residues 10–11 (SF) and His18. Residues Lys42, Thr74, and Arg88 each contribute to the substrate site. ATP-binding positions include 89–91 (GLR), Glu99, and 124–130 (YSFISST).

This sequence belongs to the bacterial CoaD family. As to quaternary structure, homohexamer. Mg(2+) is required as a cofactor.

The protein resides in the cytoplasm. The enzyme catalyses (R)-4'-phosphopantetheine + ATP + H(+) = 3'-dephospho-CoA + diphosphate. Its pathway is cofactor biosynthesis; coenzyme A biosynthesis; CoA from (R)-pantothenate: step 4/5. In terms of biological role, reversibly transfers an adenylyl group from ATP to 4'-phosphopantetheine, yielding dephospho-CoA (dPCoA) and pyrophosphate. The polypeptide is Phosphopantetheine adenylyltransferase (Leptospira interrogans serogroup Icterohaemorrhagiae serovar copenhageni (strain Fiocruz L1-130)).